Consider the following 162-residue polypeptide: UPF0114 protein PA4574 (162 aa).

3 helical membrane-spanning segments follow: residues 10-32 (YASR…ALTI), 53-75 (LILV…MVMI), and 136-156 (LMWY…MGYL).

This sequence belongs to the UPF0114 family.

Its subcellular location is the cell membrane. This chain is UPF0114 protein PA4574, found in Pseudomonas aeruginosa (strain ATCC 15692 / DSM 22644 / CIP 104116 / JCM 14847 / LMG 12228 / 1C / PRS 101 / PAO1).